The primary structure comprises 373 residues: Enoyl-[acyl-carrier-protein] reductase, mitochondrial (373 aa).

The transit peptide at 1-53 (MWVCSTLWRVRTPARQWRGLLPASGCHGPAASSYSASAEPARVRALVYGHHGD) directs the protein to the mitochondrion. Lys61 is subject to N6-acetyllysine; alternate. N6-succinyllysine; alternate is present on Lys61. Tyr94 serves as the catalytic Proton donor. NADP(+) contacts are provided by residues Asn167, 193 to 196 (NSGV), and 216 to 218 (RDR). Lys252 and Lys267 each carry N6-acetyllysine; alternate. Lys252 and Lys267 each carry N6-succinyllysine; alternate. Residues 285–288 (YGGM) and 310–312 (FWL) contribute to the NADP(+) site. Lys316 bears the N6-succinyllysine mark. Lys368 serves as a coordination point for NADP(+).

This sequence belongs to the zinc-containing alcohol dehydrogenase family. Quinone oxidoreductase subfamily. As to quaternary structure, homodimer. Isoform 2 interacts with PPARA in the nucleus and increases its activity. As to expression, highly expressed in skeletal and heart muscle. Expressed at lower level in placenta, liver, kidney and pancreas. Weakly or not expressed in lung.

Its subcellular location is the mitochondrion. The protein localises to the cytoplasm. It localises to the nucleus. The catalysed reaction is a 2,3-saturated acyl-[ACP] + NADP(+) = a (2E)-enoyl-[ACP] + NADPH + H(+). The enzyme catalyses (2E)-butenoyl-[ACP] + NADPH + H(+) = butanoyl-[ACP] + NADP(+). It catalyses the reaction (2E)-hexenoyl-[ACP] + NADPH + H(+) = hexanoyl-[ACP] + NADP(+). It carries out the reaction (2E)-octenoyl-[ACP] + NADPH + H(+) = octanoyl-[ACP] + NADP(+). The catalysed reaction is (2E)-decenoyl-[ACP] + NADPH + H(+) = decanoyl-[ACP] + NADP(+). The enzyme catalyses (2E)-dodecenoyl-[ACP] + NADPH + H(+) = dodecanoyl-[ACP] + NADP(+). It catalyses the reaction (2E)-tetradecenoyl-[ACP] + NADPH + H(+) = tetradecanoyl-[ACP] + NADP(+). It carries out the reaction (2E)-hexadecenoyl-[ACP] + NADPH + H(+) = hexadecanoyl-[ACP] + NADP(+). Catalyzes the NADPH-dependent reduction of trans-2-enoyl thioesters in mitochondrial fatty acid synthesis (fatty acid synthesis type II). Fatty acid chain elongation in mitochondria uses acyl carrier protein (ACP) as an acyl group carrier, but the enzyme accepts both ACP and CoA thioesters as substrates in vitro. Displays a preference for medium-chain over short- and long-chain substrates. May provide the octanoyl chain used for lipoic acid biosynthesis, regulating protein lipoylation and mitochondrial respiratory activity particularly in Purkinje cells. Involved in iron homeostasis; affecting Fe-S cluster assembly and ceramide metabolism. Required for proper morphology and bioenergetic functions of mitochondria. Required for maintenance of neurons. The polypeptide is Enoyl-[acyl-carrier-protein] reductase, mitochondrial (MECR) (Homo sapiens (Human)).